The primary structure comprises 290 residues: Cilia- and flagella-associated protein 298-A (290 aa).

This sequence belongs to the CFAP298 family.

The protein localises to the cytoplasm. It localises to the cytoskeleton. Its subcellular location is the cilium basal body. Functionally, plays a role in motile cilium function, possibly by acting on outer dynein arm assembly. Seems to be important for initiation rather than maintenance of cilium motility. Required for correct positioning of the cilium at the apical cell surface, suggesting an additional role in the planar cell polarity (PCP) pathway. May suppress canonical Wnt signaling activity. This Xenopus laevis (African clawed frog) protein is Cilia- and flagella-associated protein 298-A (cfap298-a).